The chain runs to 435 residues: Putative pyridoxal-phosphate dependent protein F13B12.4 (435 aa).

The first 18 residues, 1 to 18, serve as a signal peptide directing secretion; the sequence is MKLLLLALFLSISASCLA. N-linked (GlcNAc...) asparagine glycosylation is present at N79. At K89 the chain carries N6-(pyridoxal phosphate)lysine. 235–239 contributes to the pyridoxal 5'-phosphate binding site; the sequence is GTGGT. N277 carries N-linked (GlcNAc...) asparagine glycosylation. S342 is a pyridoxal 5'-phosphate binding site.

This sequence belongs to the cysteine synthase/cystathionine beta-synthase family. Highly divergent.

In Caenorhabditis elegans, this protein is Putative pyridoxal-phosphate dependent protein F13B12.4.